The sequence spans 546 residues: Chaperonin GroEL (546 aa).

Residues 29-32, lysine 50, 86-90, glycine 414, and aspartate 492 each bind ATP; these read TMGP and DGTTT.

Belongs to the chaperonin (HSP60) family. In terms of assembly, forms a cylinder of 14 subunits composed of two heptameric rings stacked back-to-back. Interacts with the co-chaperonin GroES.

It is found in the cytoplasm. The catalysed reaction is ATP + H2O + a folded polypeptide = ADP + phosphate + an unfolded polypeptide.. Functionally, together with its co-chaperonin GroES, plays an essential role in assisting protein folding. The GroEL-GroES system forms a nano-cage that allows encapsulation of the non-native substrate proteins and provides a physical environment optimized to promote and accelerate protein folding. This chain is Chaperonin GroEL, found in Helicobacter pylori (strain G27).